A 118-amino-acid chain; its full sequence is uncharacterized protein (118 aa).

This is an uncharacterized protein from Sulfolobus islandicus filamentous virus (isolate Iceland/Hveragerdi) (SIFV).